The sequence spans 91 residues: Small ribosomal subunit protein uS19 (91 aa).

This sequence belongs to the universal ribosomal protein uS19 family.

Its function is as follows. Protein S19 forms a complex with S13 that binds strongly to the 16S ribosomal RNA. In Marinobacter nauticus (strain ATCC 700491 / DSM 11845 / VT8) (Marinobacter aquaeolei), this protein is Small ribosomal subunit protein uS19.